A 745-amino-acid chain; its full sequence is Polyribonucleotide nucleotidyltransferase (745 aa).

Mg(2+)-binding residues include Asp-487 and Asp-493. The KH domain maps to 554-613; it reads PSSTTVKIDKDKIKDIIGPGGKIIKEICETSNAKIDISDDGTVSIYASDRDKIKIALDKI. The 69-residue stretch at 623–691 folds into the S1 motif domain; that stretch reads GEIFNGTVMK…NKGKAKLTIK (69 aa). The tract at residues 693–732 is disordered; that stretch reads AYKDHSSNNTKQKNNVKDDSESEQRRDTSKKRTWNEDNNT. Basic and acidic residues predominate over residues 707 to 719; the sequence is NVKDDSESEQRRD.

It belongs to the polyribonucleotide nucleotidyltransferase family. It depends on Mg(2+) as a cofactor.

The protein localises to the cytoplasm. It carries out the reaction RNA(n+1) + phosphate = RNA(n) + a ribonucleoside 5'-diphosphate. Functionally, involved in mRNA degradation. Catalyzes the phosphorolysis of single-stranded polyribonucleotides processively in the 3'- to 5'-direction. The protein is Polyribonucleotide nucleotidyltransferase of Rickettsia prowazekii (strain Madrid E).